The following is a 561-amino-acid chain: Carboxylesterase 1E (561 aa).

The N-terminal stretch at 1-18 (MCLYALILVFLAAFTAGG) is a signal peptide. N-linked (GlcNAc...) asparagine glycans are attached at residues Asn79 and Asn107. Cys87 and Cys116 are disulfide-bonded. Catalysis depends on Ser221, which acts as the Acyl-ester intermediate. The cysteines at positions 273 and 284 are disulfide-linked. Active-site charge relay system residues include Glu353 and His466. Asn489 carries an N-linked (GlcNAc...) asparagine glycan. Residues 558–561 (HTEL) carry the Prevents secretion from ER motif.

Belongs to the type-B carboxylesterase/lipase family. Expressed in liver.

It is found in the endoplasmic reticulum lumen. The protein resides in the microsome membrane. The enzyme catalyses a carboxylic ester + H2O = an alcohol + a carboxylate + H(+). It carries out the reaction all-trans-retinyl hexadecanoate + H2O = all-trans-retinol + hexadecanoate + H(+). Involved in the detoxification of xenobiotics and in the activation of ester and amide prodrugs. Hydrolyzes retinyl esters. This is Carboxylesterase 1E (Ces1e) from Rattus norvegicus (Rat).